A 158-amino-acid polypeptide reads, in one-letter code: 2-C-methyl-D-erythritol 2,4-cyclodiphosphate synthase (158 aa).

A divalent metal cation contacts are provided by Asp-9 and His-11. Residues 9–11 (DAH) and 35–36 (HS) contribute to the 4-CDP-2-C-methyl-D-erythritol 2-phosphate site. Residue His-43 coordinates a divalent metal cation. Residues 57–59 (DIG), 62–66 (FPDTD), 133–136 (TTTE), Phe-140, and Arg-143 each bind 4-CDP-2-C-methyl-D-erythritol 2-phosphate.

Belongs to the IspF family. As to quaternary structure, homotrimer. Requires a divalent metal cation as cofactor.

It catalyses the reaction 4-CDP-2-C-methyl-D-erythritol 2-phosphate = 2-C-methyl-D-erythritol 2,4-cyclic diphosphate + CMP. Its pathway is isoprenoid biosynthesis; isopentenyl diphosphate biosynthesis via DXP pathway; isopentenyl diphosphate from 1-deoxy-D-xylulose 5-phosphate: step 4/6. Its function is as follows. Involved in the biosynthesis of isopentenyl diphosphate (IPP) and dimethylallyl diphosphate (DMAPP), two major building blocks of isoprenoid compounds. Catalyzes the conversion of 4-diphosphocytidyl-2-C-methyl-D-erythritol 2-phosphate (CDP-ME2P) to 2-C-methyl-D-erythritol 2,4-cyclodiphosphate (ME-CPP) with a corresponding release of cytidine 5-monophosphate (CMP). The sequence is that of 2-C-methyl-D-erythritol 2,4-cyclodiphosphate synthase from Methylococcus capsulatus (strain ATCC 33009 / NCIMB 11132 / Bath).